The sequence spans 1448 residues: ABC transporter G family member 9 (1448 aa).

Polar residues predominate over residues 16-28 (EGGSNLNINTPSG). A disordered region spans residues 16-41 (EGGSNLNINTPSGMSDGDFNSGANSP). An ABC transporter 1 domain is found at 136 to 385 (LFKPSTWKIE…FLDLGFDCEP (250 aa)). One can recognise an ABC transmembrane type-2 1 domain in the interval 490 to 717 (WGDKFSLVSR…APYDNSVRVC (228 aa)). 7 helical membrane-spanning segments follow: residues 494-514 (FSLV…GSVF), 530-550 (AIFA…FATF), 579-599 (IPLT…MFGL), 604-624 (GKFF…TNMF), 634-654 (LYVS…YCGY), 663-683 (PWFG…ALMA), and 748-768 (LNIF…MVAV). One can recognise an ABC transporter 2 domain in the interval 822 to 1066 (FTWENIKYTV…LTSYFERQGV (245 aa)). 858 to 865 (GSSGAGKT) contacts ATP. 6 consecutive transmembrane segments (helical) span residues 1157–1177 (FYAY…GFTF), 1191–1211 (IFFI…VMVQ), 1233–1253 (FAIS…SVFF), 1272–1292 (FYFW…GGAI), 1299–1319 (MFLA…FCGV), and 1422–1442 (IAIL…FVYL). In terms of domain architecture, ABC transmembrane type-2 2 spans 1157 to 1389 (FYAYGSILQA…VPATGYVTNT (233 aa)).

Belongs to the ABC transporter superfamily. ABCG family. PDR (TC 3.A.1.205) subfamily.

It is found in the membrane. The sequence is that of ABC transporter G family member 9 (abcG9) from Dictyostelium discoideum (Social amoeba).